The chain runs to 250 residues: 2,3-bisphosphoglycerate-dependent phosphoglycerate mutase (250 aa).

Residues 8-15, 21-22, arginine 60, 87-90, lysine 98, 114-115, and 183-184 each bind substrate; these read RHGESKWN, TG, ERHY, RR, and GN. The active-site Tele-phosphohistidine intermediate is histidine 9. Glutamate 87 functions as the Proton donor/acceptor in the catalytic mechanism.

This sequence belongs to the phosphoglycerate mutase family. BPG-dependent PGAM subfamily.

The catalysed reaction is (2R)-2-phosphoglycerate = (2R)-3-phosphoglycerate. It functions in the pathway carbohydrate degradation; glycolysis; pyruvate from D-glyceraldehyde 3-phosphate: step 3/5. Catalyzes the interconversion of 2-phosphoglycerate and 3-phosphoglycerate. This Borrelia recurrentis (strain A1) protein is 2,3-bisphosphoglycerate-dependent phosphoglycerate mutase.